Reading from the N-terminus, the 185-residue chain is Ribosome-recycling factor (185 aa).

The protein belongs to the RRF family.

The protein localises to the cytoplasm. Its function is as follows. Responsible for the release of ribosomes from messenger RNA at the termination of protein biosynthesis. May increase the efficiency of translation by recycling ribosomes from one round of translation to another. The chain is Ribosome-recycling factor from Vesicomyosocius okutanii subsp. Calyptogena okutanii (strain HA).